A 276-amino-acid chain; its full sequence is UPF0328 protein ECU01_0090/ECU01_1520/ECU02_1550/ECU08_0020 (276 aa).

The disordered stretch occupies residues 1–24 (MGIIDVQRSHLTATPSKERDAPAH).

The protein belongs to the UPF0328 family.

In Encephalitozoon cuniculi (strain GB-M1) (Microsporidian parasite), this protein is UPF0328 protein ECU01_0090/ECU01_1520/ECU02_1550/ECU08_0020.